Reading from the N-terminus, the 325-residue chain is MKSTKTQPSPEREREPSFFQKLFGNLCSCFQDASIDEKPTYTPAKPVKKAPSVVQPRRVSRTLRSSESVHTNHGPERVFESPTPARTSISLESAISPNGTTNEQDIAQQGDMIDSHVHFGEQPTEPIDFADPPLPEVKRYGEGNWLLPPIAKEDEGKKCLILDLDETLVHSSFKYIEPADFVVSIEIDGLQHDVRVVKRPGVDEFLKKMGDMFEIVVFTASLAKYADPVLDMLDHSHVIRHRLFREACCNYEGNFVKDLSQLGRNLEDSIIIDNSPSSYIFHPSHAVPISSWFNDMHDMELIDLIPFLEHLARVPDVSTVLNLQL.

Residues 37 to 85 (EKPTYTPAKPVKKAPSVVQPRRVSRTLRSSESVHTNHGPERVFESPTPA) form a disordered region. At Ser52 the chain carries Phosphoserine. The segment covering 62-71 (TLRSSESVHT) has biased composition (polar residues). Residues 153-311 (EDEGKKCLIL…IDLIPFLEHL (159 aa)) enclose the FCP1 homology domain.

This is an uncharacterized protein from Schizosaccharomyces pombe (strain 972 / ATCC 24843) (Fission yeast).